The following is a 42-amino-acid chain: Beta-defensin 6 (42 aa).

A Pyrrolidone carboxylic acid modification is found at glutamine 1. Disulfide bonds link cysteine 9–cysteine 38, cysteine 16–cysteine 31, and cysteine 21–cysteine 39.

The protein belongs to the beta-defensin family. As to expression, neutrophilic granules.

It localises to the secreted. Has bactericidal activity. Active against E.coli ML35 and S.aureus 502A. This chain is Beta-defensin 6 (DEFB6), found in Bos taurus (Bovine).